We begin with the raw amino-acid sequence, 111 residues long: Putative membrane protein insertion efficiency factor (111 aa).

Belongs to the UPF0161 family.

It is found in the cell inner membrane. Functionally, could be involved in insertion of integral membrane proteins into the membrane. The polypeptide is Putative membrane protein insertion efficiency factor (Methylobacterium nodulans (strain LMG 21967 / CNCM I-2342 / ORS 2060)).